The following is a 158-amino-acid chain: MNKQILTLALCIGLCLAVGFAGSTFTPKPASWYYTTLVKPSWNPPDWLFPPVWTILFIMMGTALAKVLGTGWKKNEVNVGVVLFAIQLMLNLGWSASFFGMQSPLAGLVDIVLLWIFIVLTMLAFARVSKPASLLLVPYLCWVSFASYLNFTILQLNP.

5 helical membrane-spanning segments follow: residues 5–25 (ILTL…GSTF), 48–68 (LFPP…AKVL), 79–99 (VGVV…ASFF), 105–125 (LAGL…MLAF), and 134–154 (LLLV…FTIL).

This sequence belongs to the TspO/BZRP family.

It is found in the membrane. The protein resides in the cell membrane. In terms of biological role, binds tetrapyrroles and promotes the photooxidative degradation of protoporphyrin IX. Can bind the benzodiazepine receptor agonist PK-11195 (in vitro); this interferes with photooxidative tetrapyrrole degradation. May play a role in the transmembrane transport of tetrapyrroles and similar compounds. The polypeptide is Tryptophan-rich protein TspO (Chlorobaculum tepidum (strain ATCC 49652 / DSM 12025 / NBRC 103806 / TLS) (Chlorobium tepidum)).